The chain runs to 213 residues: tRNA (guanine-N(7)-)-methyltransferase (213 aa).

E44, E69, D96, and D118 together coordinate S-adenosyl-L-methionine. The active site involves D118. Residues K122, D154, and 192–195 (TEYE) each bind substrate.

It belongs to the class I-like SAM-binding methyltransferase superfamily. TrmB family.

It catalyses the reaction guanosine(46) in tRNA + S-adenosyl-L-methionine = N(7)-methylguanosine(46) in tRNA + S-adenosyl-L-homocysteine. Its pathway is tRNA modification; N(7)-methylguanine-tRNA biosynthesis. Catalyzes the formation of N(7)-methylguanine at position 46 (m7G46) in tRNA. This chain is tRNA (guanine-N(7)-)-methyltransferase, found in Limosilactobacillus reuteri (strain DSM 20016) (Lactobacillus reuteri).